The chain runs to 268 residues: Tryptophan synthase alpha chain (268 aa).

Catalysis depends on proton acceptor residues glutamate 49 and aspartate 60.

This sequence belongs to the TrpA family. Tetramer of two alpha and two beta chains.

The catalysed reaction is (1S,2R)-1-C-(indol-3-yl)glycerol 3-phosphate + L-serine = D-glyceraldehyde 3-phosphate + L-tryptophan + H2O. Its pathway is amino-acid biosynthesis; L-tryptophan biosynthesis; L-tryptophan from chorismate: step 5/5. Its function is as follows. The alpha subunit is responsible for the aldol cleavage of indoleglycerol phosphate to indole and glyceraldehyde 3-phosphate. This is Tryptophan synthase alpha chain from Escherichia coli (strain ATCC 8739 / DSM 1576 / NBRC 3972 / NCIMB 8545 / WDCM 00012 / Crooks).